We begin with the raw amino-acid sequence, 159 residues long: UPF0178 protein AZC_4000 (159 aa).

It belongs to the UPF0178 family.

In Azorhizobium caulinodans (strain ATCC 43989 / DSM 5975 / JCM 20966 / LMG 6465 / NBRC 14845 / NCIMB 13405 / ORS 571), this protein is UPF0178 protein AZC_4000.